A 278-amino-acid chain; its full sequence is Ferredoxin--NADP reductase A (278 aa).

In terms of domain architecture, FAD-binding FR-type spans Pro-3–Gly-103. Residues Arg-52–Ser-55 and Thr-118 contribute to the FAD site.

The protein belongs to the ferredoxin--NADP reductase type 1 family. It depends on FAD as a cofactor.

It carries out the reaction 2 reduced [4Fe-4S]-[ferredoxin] + NADP(+) + H(+) = 2 oxidized [4Fe-4S]-[ferredoxin] + NADPH. Functionally, transports electrons between NADPH and ferredoxin. Can transfer electrons to ferredoxins Fdx2 and Fdx8. Prefers NADPH to NADH. This Sorangium cellulosum (strain So ce56) (Polyangium cellulosum (strain So ce56)) protein is Ferredoxin--NADP reductase A.